The sequence spans 259 residues: Pimeloyl-[acyl-carrier protein] methyl ester esterase (259 aa).

Substrate contacts are provided by residues tryptophan 18, 78–79 (SL), and 139–143 (FLALD). Serine 78 functions as the Nucleophile in the catalytic mechanism. Residues aspartate 203 and histidine 231 contribute to the active site. Residue histidine 231 coordinates substrate.

This sequence belongs to the AB hydrolase superfamily. Carboxylesterase BioH family. Monomer.

The protein localises to the cytoplasm. The enzyme catalyses 6-carboxyhexanoyl-[ACP] methyl ester + H2O = 6-carboxyhexanoyl-[ACP] + methanol + H(+). The protein operates within cofactor biosynthesis; biotin biosynthesis. Its function is as follows. The physiological role of BioH is to remove the methyl group introduced by BioC when the pimeloyl moiety is complete. It allows to synthesize pimeloyl-ACP via the fatty acid synthetic pathway through the hydrolysis of the ester bonds of pimeloyl-ACP esters. In Stenotrophomonas maltophilia (strain K279a), this protein is Pimeloyl-[acyl-carrier protein] methyl ester esterase.